Reading from the N-terminus, the 423-residue chain is Cytochrome b mRNA maturase bI2 (423 aa).

Topologically, residues 1–31 (MAFRKSNVYLSLVNSYIIDSPQPSSINYWWN) are mitochondrial matrix. The segment at 1–143 (MAFRKSNVYL…CVYGQMSHWG (143 aa)) is cytochrome b. A helical transmembrane segment spans residues 32–52 (MGSLLGLCLVIQIVTGIFMAM). Residues 53-84 (HYSSNIELAFSSVEHIMRDVHNGYILRYLHAN) are Mitochondrial intermembrane-facing. The helical transmembrane segment at 85–105 (GASFFFMVMFMHMAKGLYYGS) threads the bilayer. The Mitochondrial matrix portion of the chain corresponds to 106–115 (YRSPRVTLWN). Residues 116-136 (VGVIIFILTIATAFLGYCCVY) traverse the membrane as a helical segment. The Mitochondrial intermembrane segment spans residues 137–153 (GQMSHWGNMNIASNMFN). The interval 144–423 (NMNIASNMFN…SMKYKLGNYL (280 aa)) is maturase. A helical transmembrane segment spans residues 154–174 (MMKTIYMMMLMLLIYIFYTIM). The Mitochondrial matrix segment spans residues 175 to 423 (MRQMMKTKEY…SMKYKLGNYL (249 aa)).

In the N-terminal section; belongs to the cytochrome b family. It in the C-terminal section; belongs to the LAGLIDADG endonuclease family.

Its subcellular location is the mitochondrion inner membrane. In terms of biological role, this protein is responsible for splicing and maturation of cytochrome b mRNA. Specifically, it may be responsible for the splicing specificity of the second intron. The chain is Cytochrome b mRNA maturase bI2 (BI2) from Saccharomyces cerevisiae (strain ATCC 204508 / S288c) (Baker's yeast).